The following is a 203-amino-acid chain: uncharacterized protein (203 aa).

4 consecutive transmembrane segments (helical) span residues 9 to 29, 42 to 62, 86 to 106, and 126 to 146; these read YNVF…IVVA, FLFL…FFDV, SGVF…ALLV, and YPLL…SIGL. Basic and acidic residues-rich tracts occupy residues 164–174 and 182–191; these read GEPTAADKTDS and DQTKSKKDGD. Residues 164–203 form a disordered region; that stretch reads GEPTAADKTDSRPVVVDLDQTKSKKDGDNPPQASGDMTSL. A compositionally biased stretch (polar residues) spans 194–203; sequence PQASGDMTSL.

It localises to the cell membrane. This is an uncharacterized protein from Mycoplasma pneumoniae (strain ATCC 29342 / M129 / Subtype 1) (Mycoplasmoides pneumoniae).